Reading from the N-terminus, the 315-residue chain is Neuroguidin (315 aa).

N-acetylalanine is present on A2. A coiled-coil region spans residues 13–41 (SAVTLLKNLQEQVMAVTAQVKSLTQKVQA). Residues 41 to 174 (AGAYPTEKGL…KGVSKKYVPP (134 aa)) are necessary for interaction with EIF4E. 3 positions are modified to phosphoserine: S121, S142, and S143. Positions 124–169 (ENDPLRFKPHPSNMMSKLSSEDEEEDEAEDDQSEASGKKSVKGVSK) are disordered. Residues 144–156 (EDEEEDEAEDDQS) show a composition bias toward acidic residues. A coiled-coil region spans residues 181–205 (YDETEAEREKKRLERAKRRALSSSV). A phosphoserine mark is found at S204 and S214. The interval 277–315 (DISALTGGTVHLDEDQNPIKKRKKIPQKGRKKKGFRRRR) is disordered. Positions 295–315 (IKKRKKIPQKGRKKKGFRRRR) are enriched in basic residues.

This sequence belongs to the SAS10 family. Part of the small subunit (SSU) processome, composed of more than 70 proteins and the RNA chaperone small nucleolar RNA (snoRNA) U3. Interacts with CPEB1 and EIF4E.

The protein resides in the nucleus. Its subcellular location is the nucleolus. It is found in the chromosome. The protein localises to the centromere. It localises to the cytoplasm. The protein resides in the cell projection. Its subcellular location is the axon. It is found in the dendrite. The protein localises to the filopodium. In terms of biological role, part of the small subunit (SSU) processome, first precursor of the small eukaryotic ribosomal subunit. During the assembly of the SSU processome in the nucleolus, many ribosome biogenesis factors, an RNA chaperone and ribosomal proteins associate with the nascent pre-rRNA and work in concert to generate RNA folding, modifications, rearrangements and cleavage as well as targeted degradation of pre-ribosomal RNA by the RNA exosome. Its dissociation from the complex determines the transition from state pre-A1 to state pre-A1*. Inhibits mRNA translation in a cytoplasmic polyadenylation element (CPE)-dependent manner. In Homo sapiens (Human), this protein is Neuroguidin.